The primary structure comprises 478 residues: Dihydrolipoyl dehydrogenase (478 aa).

FAD contacts are provided by residues 36-45 (ERYSTLGGVC), K54, and A117. C45 and C50 are joined by a disulfide. NAD(+)-binding positions include 183–187 (GGGII), E206, V239, and 270–273 (AIGR). Residues D313 and A321 each coordinate FAD. Residue H445 is the Proton acceptor of the active site.

Belongs to the class-I pyridine nucleotide-disulfide oxidoreductase family. As to quaternary structure, homodimer. It depends on FAD as a cofactor.

It is found in the cytoplasm. It carries out the reaction N(6)-[(R)-dihydrolipoyl]-L-lysyl-[protein] + NAD(+) = N(6)-[(R)-lipoyl]-L-lysyl-[protein] + NADH + H(+). Its function is as follows. Lipoamide dehydrogenase is a component of the alpha-ketoacid dehydrogenase complexes. The protein is Dihydrolipoyl dehydrogenase (lpdA) of Haemophilus influenzae (strain ATCC 51907 / DSM 11121 / KW20 / Rd).